The following is a 162-amino-acid chain: Peptide deformylase-like (162 aa).

It belongs to the polypeptide deformylase family.

In Staphylococcus epidermidis (strain ATCC 35984 / DSM 28319 / BCRC 17069 / CCUG 31568 / BM 3577 / RP62A), this protein is Peptide deformylase-like.